The sequence spans 166 residues: Large ribosomal subunit protein uL10 (166 aa).

This sequence belongs to the universal ribosomal protein uL10 family. As to quaternary structure, part of the ribosomal stalk of the 50S ribosomal subunit. The N-terminus interacts with L11 and the large rRNA to form the base of the stalk. The C-terminus forms an elongated spine to which L12 dimers bind in a sequential fashion forming a multimeric L10(L12)X complex.

Functionally, forms part of the ribosomal stalk, playing a central role in the interaction of the ribosome with GTP-bound translation factors. This is Large ribosomal subunit protein uL10 from Pseudomonas paraeruginosa (strain DSM 24068 / PA7) (Pseudomonas aeruginosa (strain PA7)).